We begin with the raw amino-acid sequence, 243 residues long: Secreted RxLR effector protein 28 (243 aa).

The N-terminal stretch at 1 to 26 (MHVSRIIAHIALATAITATTVSPTDA) is a signal peptide. The RxLR motif lies at 49–52 (RGLR). The segment at 187–243 (NVDEDKGQNFGHSVSGPPTTTLTGPHTKSGIPPFENLVAPAKGSMPNTRRNGYQFFE) is disordered. The segment covering 199–216 (SVSGPPTTTLTGPHTKSG) has biased composition (low complexity).

It belongs to the RxLR effector family.

It localises to the secreted. The protein localises to the host cytoplasm. It is found in the host nucleus. Its function is as follows. Effector that significantly enhances susceptibilities of grapevine and tobacco to pathogens. Acts as a broad suppressor of cell death to interrupt plant immunity. Completely inhibits cell death induced by cell death-inducing proteins, including the PAMP elicitor INF1 from P.infestans. Reduces the transcriptional levels of the defense-related genes and impairs the H(2)O(2) accumulation in N.benthamiana. The sequence is that of Secreted RxLR effector protein 28 from Plasmopara viticola (Downy mildew of grapevine).